Here is a 197-residue protein sequence, read N- to C-terminus: Glycerol-3-phosphate acyltransferase (197 aa).

Helical transmembrane passes span 7 to 27 (TLLP…LILT), 55 to 75 (GLAA…VLIV), 78 to 98 (VWPG…CFPV), 116 to 136 (LALA…VLFL), and 157 to 177 (VLGY…VLYL).

This sequence belongs to the PlsY family. Probably interacts with PlsX.

It is found in the cell inner membrane. It catalyses the reaction an acyl phosphate + sn-glycerol 3-phosphate = a 1-acyl-sn-glycero-3-phosphate + phosphate. It functions in the pathway lipid metabolism; phospholipid metabolism. Its function is as follows. Catalyzes the transfer of an acyl group from acyl-phosphate (acyl-PO(4)) to glycerol-3-phosphate (G3P) to form lysophosphatidic acid (LPA). This enzyme utilizes acyl-phosphate as fatty acyl donor, but not acyl-CoA or acyl-ACP. This Novosphingobium aromaticivorans (strain ATCC 700278 / DSM 12444 / CCUG 56034 / CIP 105152 / NBRC 16084 / F199) protein is Glycerol-3-phosphate acyltransferase.